Reading from the N-terminus, the 337-residue chain is CMRF35-like molecule 1 (337 aa).

The first 19 residues, 1-19 (MHLSLLVPFLFWITGCCTA), serve as a signal peptide directing secretion. The 106-residue stretch at 20-125 (EDPVTGPEEV…LDPMFKVTVN (106 aa)) folds into the Ig-like V-type domain. The Extracellular portion of the chain corresponds to 20-193 (EDPVTGPEEV…GVGDGFLDLS (174 aa)). Positions 39–45 (VQCRYTS) are plays an important role in murine norovirus (MNV) binding. 2 cysteine pairs are disulfide-bonded: cysteine 41–cysteine 109 and cysteine 55–cysteine 63. Residues 194-214 (VLLPVISAVLLLLLLVASLFA) traverse the membrane as a helical segment. Residues 215–337 (WRMVRRQKKA…IRRPLPAAMP (123 aa)) lie on the Cytoplasmic side of the membrane. Disordered regions lie at residues 248 to 270 (QPRT…GKDH) and 318 to 337 (LEEE…AAMP). Residues 252–266 (SPGSSWKKGSSMSSS) are compositionally biased toward low complexity.

This sequence belongs to the CD300 family. In terms of assembly, interacts with PTPN6/SHP-1 in a tyrosine phosphorylation dependent manner. Interacts with IL4R. Phosphorylated on tyrosine. Expressed in myeloid cells. Present on the surface of macrophages (at protein level). Highly expressed by alveolar, splenic macrophages and bone marrow-derived dendritic cells. Expression is increased following aeroallergen challenge in macrophages, mast cells, and eosinophils.

Its subcellular location is the cell membrane. Functionally, acts as an inhibitory receptor for myeloid cells and mast cells. Positively regulates the phagocytosis of apoptotic cells (efferocytosis) via phosphatidylserine (PS) recognition; recognizes and binds PS as a ligand which is expressed on the surface of apoptotic cells. Plays an important role in the maintenance of immune homeostasis, by promoting macrophage-mediated efferocytosis and by inhibiting dendritic cell-mediated efferocytosis. Negatively regulates Fc epsilon receptor-dependent mast cell activation and allergic responses via binding to ceramide which acts as a ligand. May act as a coreceptor for interleukin 4 (IL-4). Associates with and regulates IL-4 receptor alpha-mediated responses by augmenting IL-4- and IL-13-induced signaling. Negatively regulates the Toll-like receptor (TLR) signaling mediated by MYD88 and TRIF through activation of PTPN6/SHP-1 and PTPN11/SHP-2. Inhibits osteoclast formation. Induces macrophage cell death upon engagement. (Microbial infection) Acts as a functional receptor for murine norovirus (MNV). Mediates binding to the cell surface and is both necessary and sufficient for viral entry and replication. This interaction requires Mg(2+) and Ca(2+) and is enhanced by bile acids. Primary determinant of MNV species tropism and is sufficient to render cells permissive to infection by MNV. Can render nonmurine mammalian cells susceptible to MNV infection. This chain is CMRF35-like molecule 1 (Cd300lf), found in Mus musculus (Mouse).